The following is a 230-amino-acid chain: Ribonuclease 3 (230 aa).

Residues 5–127 form the RNase III domain; the sequence is HEHLARKLGI…ILGAVLRDQG (123 aa). A Mg(2+)-binding site is contributed by Glu-40. Asp-44 is an active-site residue. The Mg(2+) site is built by Asp-113 and Glu-116. The active site involves Glu-116. The region spanning 154 to 224 is the DRBM domain; it reads DPKTRLQELM…AENMLSRLSD (71 aa). The segment at 202-230 is disordered; the sequence is GEGSSRKKAEQQAAENMLSRLSDQSRFRV.

The protein belongs to the ribonuclease III family. In terms of assembly, homodimer. Mg(2+) serves as cofactor.

Its subcellular location is the cytoplasm. It catalyses the reaction Endonucleolytic cleavage to 5'-phosphomonoester.. Functionally, digests double-stranded RNA. Involved in the processing of primary rRNA transcript to yield the immediate precursors to the large and small rRNAs (23S and 16S). Processes some mRNAs, and tRNAs when they are encoded in the rRNA operon. Processes pre-crRNA and tracrRNA of type II CRISPR loci if present in the organism. The polypeptide is Ribonuclease 3 (Methylococcus capsulatus (strain ATCC 33009 / NCIMB 11132 / Bath)).